The sequence spans 193 residues: Potassium-transporting ATPase KdpC subunit (193 aa).

The chain crosses the membrane as a helical span at residues 7–27; that stretch reads PLVVIFVVLTAVTGLAYPAVM.

It belongs to the KdpC family. In terms of assembly, the system is composed of three essential subunits: KdpA, KdpB and KdpC.

It localises to the cell inner membrane. In terms of biological role, part of the high-affinity ATP-driven potassium transport (or Kdp) system, which catalyzes the hydrolysis of ATP coupled with the electrogenic transport of potassium into the cytoplasm. This subunit acts as a catalytic chaperone that increases the ATP-binding affinity of the ATP-hydrolyzing subunit KdpB by the formation of a transient KdpB/KdpC/ATP ternary complex. The sequence is that of Potassium-transporting ATPase KdpC subunit from Burkholderia ambifaria (strain ATCC BAA-244 / DSM 16087 / CCUG 44356 / LMG 19182 / AMMD) (Burkholderia cepacia (strain AMMD)).